Here is a 191-residue protein sequence, read N- to C-terminus: Large ribosomal subunit protein bL9 (191 aa).

The segment at 171–191 is disordered; it reads EDALKPEDFFNPEAELESEEE.

The protein belongs to the bacterial ribosomal protein bL9 family.

In terms of biological role, binds to the 23S rRNA. This Rhizobium meliloti (strain 1021) (Ensifer meliloti) protein is Large ribosomal subunit protein bL9.